Consider the following 315-residue polypeptide: Glutathione synthetase (315 aa).

The ATP-grasp domain maps to 125-310; it reads KLYTAWFADL…ITGMLMDAIE (186 aa). 151 to 207 contacts ATP; the sequence is WEKHGDIIMKPLDGMGGASIFRVKEGDPNIGVIAETLTELGNRYCMAQNYLPAIKDG. The Mg(2+) site is built by Glu-281 and Asn-283.

This sequence belongs to the prokaryotic GSH synthase family. Mg(2+) is required as a cofactor. Requires Mn(2+) as cofactor.

The enzyme catalyses gamma-L-glutamyl-L-cysteine + glycine + ATP = glutathione + ADP + phosphate + H(+). It participates in sulfur metabolism; glutathione biosynthesis; glutathione from L-cysteine and L-glutamate: step 2/2. This chain is Glutathione synthetase, found in Salmonella typhi.